The following is a 119-amino-acid chain: Ribonuclease P protein component (119 aa).

It belongs to the RnpA family. Consists of a catalytic RNA component (M1 or rnpB) and a protein subunit.

It carries out the reaction Endonucleolytic cleavage of RNA, removing 5'-extranucleotides from tRNA precursor.. RNaseP catalyzes the removal of the 5'-leader sequence from pre-tRNA to produce the mature 5'-terminus. It can also cleave other RNA substrates such as 4.5S RNA. The protein component plays an auxiliary but essential role in vivo by binding to the 5'-leader sequence and broadening the substrate specificity of the ribozyme. The chain is Ribonuclease P protein component from Bacillus cereus (strain ATCC 14579 / DSM 31 / CCUG 7414 / JCM 2152 / NBRC 15305 / NCIMB 9373 / NCTC 2599 / NRRL B-3711).